Reading from the N-terminus, the 1017-residue chain is Peroxisomal ATPase PEX6 (1017 aa).

An ATP-binding site is contributed by 758 to 765; that stretch reads GPPGTGKT.

This sequence belongs to the AAA ATPase family. Interacts with PEX1; forming the PEX1-PEX6 AAA ATPase complex, which is composed of a heterohexamer formed by a trimer of PEX1-PEX6 dimers.

It is found in the cytoplasm. The protein localises to the cytosol. The protein resides in the peroxisome membrane. The enzyme catalyses ATP + H2O = ADP + phosphate + H(+). Component of the PEX1-PEX6 AAA ATPase complex, a protein dislocase complex that mediates the ATP-dependent extraction of the PEX5 receptor from peroxisomal membranes, an essential step for PEX5 recycling. Specifically recognizes PEX5 monoubiquitinated at 'Cys-6', and pulls it out of the peroxisome lumen through the PEX2-PEX10-PEX12 retrotranslocation channel. Extraction by the PEX1-PEX6 AAA ATPase complex is accompanied by unfolding of the TPR repeats and release of bound cargo from PEX5. This chain is Peroxisomal ATPase PEX6 (PEX6), found in Candida glabrata (strain ATCC 2001 / BCRC 20586 / JCM 3761 / NBRC 0622 / NRRL Y-65 / CBS 138) (Yeast).